The sequence spans 397 residues: 3-ketoacyl-CoA thiolase, mitochondrial (397 aa).

The N-terminal 16 residues, 1-16 (MALLRGVFIVAAKRTP), are a transit peptide targeting the mitochondrion; not cleaved. Position 25 is an N6-acetyllysine; alternate (K25). N6-succinyllysine; alternate is present on K25. S28 is subject to Phosphoserine. K45 carries the N6-succinyllysine modification. The active-site Acyl-thioester intermediate is the C92. T119 bears the Phosphothreonine mark. At S121 the chain carries Phosphoserine. Y127 carries the post-translational modification Phosphotyrosine. T136 is subject to Phosphothreonine. An N6-acetyllysine; alternate mark is found at K137, K143, K158, K171, K191, and K209. 6 positions are modified to N6-succinyllysine; alternate: K137, K143, K158, K171, K191, and K209. K211, K212, and K214 each carry N6-succinyllysine. Positions 224 and 227 each coordinate CoA. K234 is modified (N6-acetyllysine; alternate). K234 bears the N6-succinyllysine; alternate mark. N6-succinyllysine is present on K240. K241 carries the post-translational modification N6-acetyllysine. A CoA-binding site is contributed by S251. N6-acetyllysine is present on residues K269 and K270. K305 bears the N6-acetyllysine; alternate mark. The residue at position 305 (K305) is an N6-succinyllysine; alternate. A Phosphoserine modification is found at S310. K312 is modified (N6-acetyllysine; alternate). K312 carries the post-translational modification N6-succinyllysine; alternate. K340 carries the N6-acetyllysine modification. Position 344 is a phosphoserine (S344). K375 bears the N6-acetyllysine mark. C382 functions as the Proton donor/acceptor in the catalytic mechanism.

This sequence belongs to the thiolase-like superfamily. Thiolase family. As to quaternary structure, homotetramer. Interacts with BNIP3.

It is found in the mitochondrion. It catalyses the reaction an acyl-CoA + acetyl-CoA = a 3-oxoacyl-CoA + CoA. The enzyme catalyses 2 acetyl-CoA = acetoacetyl-CoA + CoA. It carries out the reaction acetyl-CoA + H2O = acetate + CoA + H(+). The catalysed reaction is propanoyl-CoA + H2O = propanoate + CoA + H(+). It catalyses the reaction butanoyl-CoA + H2O = butanoate + CoA + H(+). The enzyme catalyses hexanoyl-CoA + H2O = hexanoate + CoA + H(+). It carries out the reaction octanoyl-CoA + H2O = octanoate + CoA + H(+). The catalysed reaction is decanoyl-CoA + H2O = decanoate + CoA + H(+). It catalyses the reaction dodecanoyl-CoA + H2O = dodecanoate + CoA + H(+). The enzyme catalyses tetradecanoyl-CoA + H2O = tetradecanoate + CoA + H(+). It carries out the reaction hexadecanoyl-CoA + H2O = hexadecanoate + CoA + H(+). Its pathway is lipid metabolism; fatty acid beta-oxidation. In the production of energy from fats, this is one of the enzymes that catalyzes the last step of the mitochondrial beta-oxidation pathway, an aerobic process breaking down fatty acids into acetyl-CoA. Using free coenzyme A/CoA, catalyzes the thiolytic cleavage of medium- to long-chain unbranched 3-oxoacyl-CoAs into acetyl-CoA and a fatty acyl-CoA shortened by two carbon atoms. Also catalyzes the condensation of two acetyl-CoA molecules into acetoacetyl-CoA and could be involved in the production of ketone bodies. Also displays hydrolase activity on various fatty acyl-CoAs. Thereby, could be responsible for the production of acetate in a side reaction to beta-oxidation. Abolishes BNIP3-mediated apoptosis and mitochondrial damage. The chain is 3-ketoacyl-CoA thiolase, mitochondrial (Acaa2) from Mus musculus (Mouse).